Consider the following 152-residue polypeptide: MMKKIDVKILDPRVGQQFPLPTYATSGSAGLDLRACLDEAVALAPGATTLIPTGLAIHVADPSLAAVILPRSGLGHKHGIVLGNLVGLIDSDYQGQLMVSVWNRGQDSFTIEPGERIAQMVFVPVVQAEFNLVDDFDATDRGEGGFGHSGRK.

Substrate contacts are provided by residues 71–73 (RSG), Asn84, 88–90 (LID), and Met98.

It belongs to the dUTPase family. Mg(2+) is required as a cofactor.

It carries out the reaction dUTP + H2O = dUMP + diphosphate + H(+). Its pathway is pyrimidine metabolism; dUMP biosynthesis; dUMP from dCTP (dUTP route): step 2/2. Its function is as follows. This enzyme is involved in nucleotide metabolism: it produces dUMP, the immediate precursor of thymidine nucleotides and it decreases the intracellular concentration of dUTP so that uracil cannot be incorporated into DNA. In Enterobacter sp. (strain 638), this protein is Deoxyuridine 5'-triphosphate nucleotidohydrolase.